The following is a 344-amino-acid chain: FCS-Like Zinc finger 10 (344 aa).

The segment at 270-314 (DFLSFCYGCSKKLGMGEDIYMYSGYKAFCSSECRSKEIDLDEEME) adopts an FLZ-type zinc-finger fold. The segment covering 309 to 320 (LDEEMEDGDEEE) has biased composition (acidic residues). Positions 309 to 344 (LDEEMEDGDEEEAIKSVSSSDKESKKKSNGVFFTVG) are disordered.

The protein belongs to the FLZ family. Interacts with KIN10 and KIN11 via its FLZ-type zinc finger domain. Interacts with KINB1, KINB2 and KINB3 via its N-terminal part. Forms homodimer and heterodimer with FLZ2 and FLZ12 in vitro. In terms of tissue distribution, early expressed in hypocotyl and cotyledon and preferentially in the stelar region of the shoot and root. Later expressed in root-shoot junction, lateral root, old or senescing leaves and in pistil and pollen of flower buds or open flowers.

The protein localises to the cytoplasm. The protein resides in the nucleus. It localises to the endoplasmic reticulum. In terms of biological role, may act as an adapter to facilitate the interaction of SnRK1 complex with effector proteins, conferring tissue- and stimulus-type specific differences in the SnRK1 regulation pathway. Negatively regulates KIN10 leading to a repression of the SnRK1 signaling pathway. The protein is FCS-Like Zinc finger 10 of Arabidopsis thaliana (Mouse-ear cress).